The sequence spans 225 residues: GTP:AMP phosphotransferase, mitochondrial (225 aa).

24–29 (GSGKGT) is a binding site for GTP. The interval 45 to 74 (SSGDILRQEIKSESTLGREATTYIAQGKLL) is NMP. AMP-binding positions include serine 46, arginine 51, 72 to 74 (KLL), 103 to 106 (GFPR), and glutamine 110. The interval 144–181 (NRYVHVPSGRVYNLQYNPPKVPGLDDITGEPLTKRLDD) is LID. GTP contacts are provided by residues arginine 145 and 154 to 155 (VY). Positions 178 and 189 each coordinate AMP. Serine 218 is a binding site for GTP.

The protein belongs to the adenylate kinase family. AK3 subfamily. As to quaternary structure, monomer.

Its subcellular location is the mitochondrion matrix. It carries out the reaction a ribonucleoside 5'-triphosphate + AMP = a ribonucleoside 5'-diphosphate + ADP. In terms of biological role, involved in maintaining the homeostasis of cellular nucleotides by catalyzing the interconversion of nucleoside phosphates. Has GTP:AMP phosphotransferase and ITP:AMP phosphotransferase activities. Does not accept ATP as phosphate donor. This chain is GTP:AMP phosphotransferase, mitochondrial, found in Saccharomyces cerevisiae (strain ATCC 204508 / S288c) (Baker's yeast).